A 111-amino-acid chain; its full sequence is T cell receptor beta variable 20-1 (111 aa).

The signal sequence occupies residues 1–15 (MLLLLLLLGPGSGLG). Residues 16–111 (AVVSQHPSRV…DSSFYICSAR (96 aa)) enclose the Ig-like domain. Cysteine 37 and cysteine 108 are oxidised to a cystine.

Alpha-beta TR is a heterodimer composed of an alpha and beta chain; disulfide-linked. The alpha-beta TR is associated with the transmembrane signaling CD3 coreceptor proteins to form the TR-CD3 (TcR or TCR). The assembly of alpha-beta TR heterodimers with CD3 occurs in the endoplasmic reticulum where a single alpha-beta TR heterodimer associates with one CD3D-CD3E heterodimer, one CD3G-CD3E heterodimer and one CD247 homodimer forming a stable octameric structure. CD3D-CD3E and CD3G-CD3E heterodimers preferentially associate with TR alpha and TR beta chains, respectively. The association of the CD247 homodimer is the last step of TcR assembly in the endoplasmic reticulum and is required for transport to the cell surface.

Its subcellular location is the cell membrane. V region of the variable domain of T cell receptor (TR) beta chain that participates in the antigen recognition. Alpha-beta T cell receptors are antigen specific receptors which are essential to the immune response and are present on the cell surface of T lymphocytes. Recognize peptide-major histocompatibility (MH) (pMH) complexes that are displayed by antigen presenting cells (APC), a prerequisite for efficient T cell adaptive immunity against pathogens. Binding of alpha-beta TR to pMH complex initiates TR-CD3 clustering on the cell surface and intracellular activation of LCK that phosphorylates the ITAM motifs of CD3G, CD3D, CD3E and CD247 enabling the recruitment of ZAP70. In turn ZAP70 phosphorylates LAT, which recruits numerous signaling molecules to form the LAT signalosome. The LAT signalosome propagates signal branching to three major signaling pathways, the calcium, the mitogen-activated protein kinase (MAPK) kinase and the nuclear factor NF-kappa-B (NF-kB) pathways, leading to the mobilization of transcription factors that are critical for gene expression and essential for T cell growth and differentiation. The T cell repertoire is generated in the thymus, by V-(D)-J rearrangement. This repertoire is then shaped by intrathymic selection events to generate a peripheral T cell pool of self-MH restricted, non-autoaggressive T cells. Post-thymic interaction of alpha-beta TR with the pMH complexes shapes TR structural and functional avidity. In Homo sapiens (Human), this protein is T cell receptor beta variable 20-1.